The chain runs to 521 residues: Myocyte-specific enhancer factor 2D (521 aa).

Positions 3–57 (RKKIQIQRITDERNRQVTFTKRKFGLMKKAYELSVLCDCEIALIIFNHSNKLFQY) constitute an MADS-box domain. Positions 58–86 (ASTDMDKVLLKYTEYNEPHESRTNADIIE) form a DNA-binding region, mef2-type. Phosphoserine occurs at positions 98, 106, and 110. A Phosphoserine; by PKA modification is found at S121. Residues 174–207 (TDPRLLSPQQPALQRNSVSPGLPQRPASAGAMLG) are disordered. S180 bears the Phosphoserine; by MAPK7 mark. Polar residues predominate over residues 180–192 (SPQQPALQRNSVS). Residue S190 is modified to Phosphoserine; by PKA. A Phosphoserine modification is found at S231. A disordered region spans residues 244-266 (NKVIPAKSPPPPTHSTQLGAPSR). Position 245 is an N6-acetyllysine (K245). Residue S251 is modified to Phosphoserine. The segment at 286–292 (TEDHLDL) is beta domain. 2 disordered regions span residues 357-407 (SLGN…QSHL) and 437-521 (SIKS…WTLK). Pro residues predominate over residues 373-400 (PQQPQPPQQQPPQPQQPQPQQPQQPQQP). K439 is subject to N6-acetyllysine; alternate. K439 participates in a covalent cross-link: Glycyl lysine isopeptide (Lys-Gly) (interchain with G-Cter in SUMO); alternate. S444 is modified (phosphoserine).

Belongs to the MEF2 family. In terms of assembly, interacts with MYOG. Forms a complex with class II HDACs in undifferentiating cells. On myogenic differentiation, HDACs are released into the cytoplasm allowing MEF2s to interact with other proteins for activation. Interacts with HDAC4 (in undifferentiating cells); the interaction translocates MEF2D to nuclear dots. Forms a heterodimer with MEF2A. Interacts with MAPK7; the interaction phosphorylates but does not activate MEF2D. Interacts with CCAR2 and HDAC3. Post-translationally, phosphorylated on Ser-444 by CDK5 is required for Lys-439 sumoylation and inhibits transcriptional activity. In neurons, enhanced CDK5 activity induced by neurotoxins promotes caspase 3-mediated cleavage leading to neuron apoptosis. Phosphorylation on Ser-180 can be enhanced by EGF. Phosphorylated and activated by CaMK4. Acetylated on Lys-439 by CREBBP. Acetylated by EP300. Deacetylated by SIRT1 and HDAC3. In terms of processing, sumoylated on Lys-439 with SUMO2 but not SUMO1; which inhibits transcriptional activity and myogenic activity. Desumoylated by SENP3. Post-translationally, proteolytically cleaved in cerebellar granule neurons on several sites by caspase 7 following neurotoxicity. Preferentially cleaves the CDK5-mediated hyperphosphorylated form which leads to neuron apoptosis and transcriptional inactivation.

The protein localises to the nucleus. In terms of biological role, transcriptional activator which binds specifically to the MEF2 element, 5'-YTA[AT](4)TAR-3', found in numerous muscle-specific, growth factor- and stress-induced genes. Mediates cellular functions not only in skeletal and cardiac muscle development, but also in neuronal differentiation and survival. Plays diverse roles in the control of cell growth, survival and apoptosis via p38 MAPK signaling in muscle-specific and/or growth factor-related transcription. Plays a critical role in the regulation of neuronal apoptosis. This Homo sapiens (Human) protein is Myocyte-specific enhancer factor 2D (MEF2D).